Reading from the N-terminus, the 95-residue chain is Large ribosomal subunit protein uL23 (95 aa).

Belongs to the universal ribosomal protein uL23 family. Part of the 50S ribosomal subunit. Contacts protein L29, and trigger factor when it is bound to the ribosome.

Functionally, one of the early assembly proteins it binds 23S rRNA. One of the proteins that surrounds the polypeptide exit tunnel on the outside of the ribosome. Forms the main docking site for trigger factor binding to the ribosome. In Anoxybacillus flavithermus (strain DSM 21510 / WK1), this protein is Large ribosomal subunit protein uL23.